A 434-amino-acid chain; its full sequence is Beta-phenylalanine transaminase (434 aa).

(S)-3-amino-3-phenylpropanoate is bound at residue Arg-41. Position 132 to 133 (132 to 133 (GT)) interacts with pyridoxal 5'-phosphate. An N6-(pyridoxal phosphate)lysine modification is found at Lys-267. Thr-300 lines the pyridoxal 5'-phosphate pocket.

This sequence belongs to the class-III pyridoxal-phosphate-dependent aminotransferase family. In terms of assembly, homodimer. The cofactor is pyridoxal 5'-phosphate.

The enzyme catalyses (S)-3-amino-3-phenylpropanoate + 2-oxoglutarate = 3-oxo-3-phenylpropanoate + L-glutamate. The catalysed reaction is (S)-3-amino-3-phenylpropanoate + pyruvate = 3-oxo-3-phenylpropanoate + L-alanine. Is inhibited by 2-aminooxyacetate (AOA), a mimic of beta-alanine and a known inhibitor of aminotransferases. Functionally, aminotransferase that acts exclusively on beta-amino acids and exhibits a broad substrate range in vitro, accepting meta-, para- and, to a lesser extent, ortho-substituted beta-phenylalanine derivatives as amino donors, and 2-oxoglutarate or pyruvate as amino acceptors. Is highly enantioselective toward (S)-beta-phenylalanine (is not active with (R)-beta-phenylalanine) and derivatives with different substituents on the phenyl ring, allowing the kinetic resolution of various racemic beta-amino acids to yield (R)-beta-amino acids with &gt;95% enantiomeric excess (ee). Highly prefers aromatic beta-amino acids over aliphatic beta-amino acids; cannot use beta-alanine or beta-glutamate as substrate. Is likely involved in the beta-phenylalanine degradation pathway that allows V.paradoxus strain CBF3 to use beta-phenylalanine as a sole nitrogen source. The sequence is that of Beta-phenylalanine transaminase from Variovorax paradoxus.